The chain runs to 324 residues: Lipoyl synthase (324 aa).

Positions 65, 70, 76, 91, 95, 98, and 302 each coordinate [4Fe-4S] cluster. One can recognise a Radical SAM core domain in the interval 77 to 291; sequence WEDREATFLI…AQYAEGLGFA (215 aa).

This sequence belongs to the radical SAM superfamily. Lipoyl synthase family. [4Fe-4S] cluster serves as cofactor.

It localises to the cytoplasm. The enzyme catalyses [[Fe-S] cluster scaffold protein carrying a second [4Fe-4S](2+) cluster] + N(6)-octanoyl-L-lysyl-[protein] + 2 oxidized [2Fe-2S]-[ferredoxin] + 2 S-adenosyl-L-methionine + 4 H(+) = [[Fe-S] cluster scaffold protein] + N(6)-[(R)-dihydrolipoyl]-L-lysyl-[protein] + 4 Fe(3+) + 2 hydrogen sulfide + 2 5'-deoxyadenosine + 2 L-methionine + 2 reduced [2Fe-2S]-[ferredoxin]. The protein operates within protein modification; protein lipoylation via endogenous pathway; protein N(6)-(lipoyl)lysine from octanoyl-[acyl-carrier-protein]: step 2/2. Functionally, catalyzes the radical-mediated insertion of two sulfur atoms into the C-6 and C-8 positions of the octanoyl moiety bound to the lipoyl domains of lipoate-dependent enzymes, thereby converting the octanoylated domains into lipoylated derivatives. This Mycobacterium ulcerans (strain Agy99) protein is Lipoyl synthase.